We begin with the raw amino-acid sequence, 98 residues long: MSLIHMNVMMAFSMSLVGLLMYRSHLMSALLCLEGMALSLFIFTTLTTLNLHFTLANMAPIILLVFTACEAAIGLALLVMISNTYGTDYVQSLNLLQC.

A run of 3 helical transmembrane segments spans residues 1–21, 26–46, and 61–81; these read MSLI…GLLM, LMSA…FTTL, and IILL…LVMI.

It belongs to the complex I subunit 4L family. Core subunit of respiratory chain NADH dehydrogenase (Complex I) which is composed of 45 different subunits.

It is found in the mitochondrion inner membrane. The catalysed reaction is a ubiquinone + NADH + 5 H(+)(in) = a ubiquinol + NAD(+) + 4 H(+)(out). In terms of biological role, core subunit of the mitochondrial membrane respiratory chain NADH dehydrogenase (Complex I) which catalyzes electron transfer from NADH through the respiratory chain, using ubiquinone as an electron acceptor. Part of the enzyme membrane arm which is embedded in the lipid bilayer and involved in proton translocation. The chain is NADH-ubiquinone oxidoreductase chain 4L (MT-ND4L) from Physeter macrocephalus (Sperm whale).